We begin with the raw amino-acid sequence, 498 residues long: Lysine--tRNA ligase (498 aa).

The Mg(2+) site is built by glutamate 407 and glutamate 414.

Belongs to the class-II aminoacyl-tRNA synthetase family. Homodimer. The cofactor is Mg(2+).

It is found in the cytoplasm. It catalyses the reaction tRNA(Lys) + L-lysine + ATP = L-lysyl-tRNA(Lys) + AMP + diphosphate. The chain is Lysine--tRNA ligase from Rhizobium johnstonii (strain DSM 114642 / LMG 32736 / 3841) (Rhizobium leguminosarum bv. viciae).